The sequence spans 609 residues: Protein kinase PVPK-1 (609 aa).

Polar residues predominate over residues 1 to 19; it reads MESSVNGVDSLSEVQNSVS. Disordered regions lie at residues 1–51 and 80–100; these read MESS…GHQT and PTKL…EPNG. Residues 229–565 form the Protein kinase domain; that stretch reads FRLLKKLGCG…ATEIKQHPFF (337 aa). ATP-binding positions include 235–243 and Lys-258; that span reads LGCGDIGSV. The active-site Proton acceptor is the Asp-354. The tract at residues 429 to 448 is disordered; the sequence is GKSKKDKKSKPKNDMHNQVT.

This sequence belongs to the protein kinase superfamily. Ser/Thr protein kinase family.

It carries out the reaction L-seryl-[protein] + ATP = O-phospho-L-seryl-[protein] + ADP + H(+). It catalyses the reaction L-threonyl-[protein] + ATP = O-phospho-L-threonyl-[protein] + ADP + H(+). This chain is Protein kinase PVPK-1, found in Phaseolus vulgaris (Kidney bean).